We begin with the raw amino-acid sequence, 355 residues long: uncharacterized protein (355 aa).

132 to 139 (GPPGCGKT) contributes to the ATP binding site.

Belongs to the AAA ATPase family.

It is found in the mitochondrion. This is an uncharacterized protein from Schizosaccharomyces pombe (strain 972 / ATCC 24843) (Fission yeast).